The sequence spans 357 residues: Peptide chain release factor 1 (357 aa).

The residue at position 233 (Gln233) is an N5-methylglutamine.

Belongs to the prokaryotic/mitochondrial release factor family. Methylated by PrmC. Methylation increases the termination efficiency of RF1.

It is found in the cytoplasm. Its function is as follows. Peptide chain release factor 1 directs the termination of translation in response to the peptide chain termination codons UAG and UAA. The sequence is that of Peptide chain release factor 1 from Enterococcus faecalis (strain ATCC 700802 / V583).